A 521-amino-acid polypeptide reads, in one-letter code: Protein translocase subunit SecD (521 aa).

The next 6 helical transmembrane spans lie at L8–G28, A359–Y379, I388–L408, L410–I430, I459–G479, and G483–S503.

This sequence belongs to the SecD/SecF family. SecD subfamily. Forms a complex with SecF. Part of the essential Sec protein translocation apparatus which comprises SecA, SecYEG and auxiliary proteins SecDF-YajC and YidC.

It localises to the cell inner membrane. Functionally, part of the Sec protein translocase complex. Interacts with the SecYEG preprotein conducting channel. SecDF uses the proton motive force (PMF) to complete protein translocation after the ATP-dependent function of SecA. This chain is Protein translocase subunit SecD, found in Acetobacter pasteurianus (strain NBRC 105184 / IFO 3283-01).